The following is a 469-amino-acid chain: UDP-N-acetylmuramate--L-alanine ligase (469 aa).

Gly113 to Thr119 provides a ligand contact to ATP.

The protein belongs to the MurCDEF family.

It is found in the cytoplasm. The catalysed reaction is UDP-N-acetyl-alpha-D-muramate + L-alanine + ATP = UDP-N-acetyl-alpha-D-muramoyl-L-alanine + ADP + phosphate + H(+). The protein operates within cell wall biogenesis; peptidoglycan biosynthesis. In terms of biological role, cell wall formation. This chain is UDP-N-acetylmuramate--L-alanine ligase, found in Neisseria gonorrhoeae (strain ATCC 700825 / FA 1090).